Here is a 65-residue protein sequence, read N- to C-terminus: Large ribosomal subunit protein uL29 (65 aa).

This sequence belongs to the universal ribosomal protein uL29 family.

In Buchnera aphidicola subsp. Schizaphis graminum (strain Sg), this protein is Large ribosomal subunit protein uL29.